The chain runs to 132 residues: Small ribosomal subunit protein uS11 (132 aa).

It belongs to the universal ribosomal protein uS11 family. In terms of assembly, part of the 30S ribosomal subunit. Interacts with proteins S7 and S18. Binds to IF-3.

Its function is as follows. Located on the platform of the 30S subunit, it bridges several disparate RNA helices of the 16S rRNA. Forms part of the Shine-Dalgarno cleft in the 70S ribosome. The chain is Small ribosomal subunit protein uS11 from Chlamydia caviae (strain ATCC VR-813 / DSM 19441 / 03DC25 / GPIC) (Chlamydophila caviae).